Here is a 53-residue protein sequence, read N- to C-terminus: uncharacterized protein (53 aa).

This is an uncharacterized protein from Thermoproteus tenax (TTV1).